The chain runs to 211 residues: Methylthioribulose-1-phosphate dehydratase (211 aa).

The Zn(2+) site is built by His105 and His107.

The protein belongs to the aldolase class II family. MtnB subfamily. Requires Zn(2+) as cofactor.

It carries out the reaction 5-(methylsulfanyl)-D-ribulose 1-phosphate = 5-methylsulfanyl-2,3-dioxopentyl phosphate + H2O. It participates in amino-acid biosynthesis; L-methionine biosynthesis via salvage pathway; L-methionine from S-methyl-5-thio-alpha-D-ribose 1-phosphate: step 2/6. Catalyzes the dehydration of methylthioribulose-1-phosphate (MTRu-1-P) into 2,3-diketo-5-methylthiopentyl-1-phosphate (DK-MTP-1-P). The sequence is that of Methylthioribulose-1-phosphate dehydratase from Acidiphilium cryptum (strain JF-5).